Reading from the N-terminus, the 213-residue chain is MAKIHFRTAQFLISAPSIRQCPTEEGTEVAFAGRSNAGKSSAINTLTGNGKLARTSKTPGRTQLINFFNFPAAPDQRIVDLPGYGYAKVPMAVKKKWQADLSEYLQQRDALRGLVIVMDIRHPLQDFDTMMINWAVEGEMPVHLLLTKADKLKPGAAKSTLLAVQKHMRDAQVDDLVSAQMFSALKKQGINQLEDVLNGWLLPQHDEPEAAQE.

The region spanning 25–203 (EGTEVAFAGR…EDVLNGWLLP (179 aa)) is the EngB-type G domain. Residues 33–40 (GRSNAGKS), 60–64 (GRTQL), 80–83 (DLPG), 147–150 (TKAD), and 179–184 (AQMFSA) each bind GTP. S40 and T62 together coordinate Mg(2+).

This sequence belongs to the TRAFAC class TrmE-Era-EngA-EngB-Septin-like GTPase superfamily. EngB GTPase family. It depends on Mg(2+) as a cofactor.

Its function is as follows. Necessary for normal cell division and for the maintenance of normal septation. In Saccharophagus degradans (strain 2-40 / ATCC 43961 / DSM 17024), this protein is Probable GTP-binding protein EngB.